A 180-amino-acid polypeptide reads, in one-letter code: Inner membrane-spanning protein YciB (180 aa).

5 helical membrane-spanning segments follow: residues 10 to 30 (IIAF…GVLM), 47 to 67 (ITTR…VTLL), 74 to 94 (IKMK…GGLI), 121 to 141 (YAWI…AEFW), and 151 to 171 (VFGI…YMYH).

The protein belongs to the YciB family.

The protein resides in the cell inner membrane. Plays a role in cell envelope biogenesis, maintenance of cell envelope integrity and membrane homeostasis. The chain is Inner membrane-spanning protein YciB from Idiomarina loihiensis (strain ATCC BAA-735 / DSM 15497 / L2-TR).